Consider the following 338-residue polypeptide: Dehydrogenase/reductase SDR family member 7 (338 aa).

The signal sequence occupies residues 1–28 (MSWELLLWLLALCALILPLVQLLRFLRA). Residues Ser-60 and Ile-62 each coordinate NAD(+). Substrate is bound at residue Ser-190. NAD(+) is bound by residues Tyr-203, Lys-207, and Ser-239. Tyr-203 functions as the Proton acceptor in the catalytic mechanism.

This sequence belongs to the short-chain dehydrogenases/reductases (SDR) family.

The protein resides in the endoplasmic reticulum membrane. It catalyses the reaction all-trans-retinol + NADP(+) = all-trans-retinal + NADPH + H(+). The catalysed reaction is 5alpha-androstane-3alpha,17beta-diol + NADP(+) = 17beta-hydroxy-5alpha-androstan-3-one + NADPH + H(+). NADPH-dependent oxidoreductase which catalyzes the reduction of a variety of compounds bearing carbonyl groups including steroids, retinoids and xenobiotics. Catalyzes the reduction/inactivation of 5alpha-dihydrotestosterone to 3alpha-androstanediol, with a possible role in the modulation of androgen receptor function. Involved in the reduction of all-trans-retinal to all-trans-retinol. Converts cortisone to 20beta-dihydrocortisone in vitro, although the physiological relevance of this activity is questionable. Reduces exogenous compounds such as quinones (1,2-naphtoquinone, 9,10-phenantrenequinone and benzoquinone) and other xenobiotics (alpha-diketones) in vitro, suggesting a role in the biotransformation of xenobiotics with carbonyl group. A dehydrogenase activity has not been detected so far. May play a role as tumor suppressor. The sequence is that of Dehydrogenase/reductase SDR family member 7 from Mus musculus (Mouse).